We begin with the raw amino-acid sequence, 378 residues long: Probable selenide, water dikinase (378 aa).

C33 is an active-site residue. Residues K36, 63-65 (GLD), D83, D106, and 158-160 (GQT) each bind ATP. Residue D65 coordinates Mg(2+). D106 is a binding site for Mg(2+). D260 provides a ligand contact to Mg(2+).

This sequence belongs to the selenophosphate synthase 1 family. Class I subfamily. As to quaternary structure, homodimer. The cofactor is Mg(2+).

It catalyses the reaction hydrogenselenide + ATP + H2O = selenophosphate + AMP + phosphate + 2 H(+). Synthesizes selenophosphate from selenide and ATP. The polypeptide is Probable selenide, water dikinase (seld-1) (Caenorhabditis elegans).